Consider the following 411-residue polypeptide: LL-diaminopimelate aminotransferase (411 aa).

Positions 15 and 42 each coordinate substrate. Pyridoxal 5'-phosphate contacts are provided by residues Tyr72, 108–109 (SK), Tyr132, Asn187, Tyr218, and 246–248 (SFS). Lys109, Tyr132, and Asn187 together coordinate substrate. Position 249 is an N6-(pyridoxal phosphate)lysine (Lys249). Positions 257 and 292 each coordinate pyridoxal 5'-phosphate. The substrate site is built by Asn292 and Arg388.

Belongs to the class-I pyridoxal-phosphate-dependent aminotransferase family. LL-diaminopimelate aminotransferase subfamily. As to quaternary structure, homodimer. It depends on pyridoxal 5'-phosphate as a cofactor.

It carries out the reaction (2S,6S)-2,6-diaminopimelate + 2-oxoglutarate = (S)-2,3,4,5-tetrahydrodipicolinate + L-glutamate + H2O + H(+). It functions in the pathway amino-acid biosynthesis; L-lysine biosynthesis via DAP pathway; LL-2,6-diaminopimelate from (S)-tetrahydrodipicolinate (aminotransferase route): step 1/1. Functionally, involved in the synthesis of meso-diaminopimelate (m-DAP or DL-DAP), required for both lysine and peptidoglycan biosynthesis. Catalyzes the direct conversion of tetrahydrodipicolinate to LL-diaminopimelate. The sequence is that of LL-diaminopimelate aminotransferase from Synechococcus elongatus (strain ATCC 33912 / PCC 7942 / FACHB-805) (Anacystis nidulans R2).